The following is a 307-amino-acid chain: Methionyl-tRNA formyltransferase (307 aa).

109 to 112 (SLLP) is a (6S)-5,6,7,8-tetrahydrofolate binding site.

It belongs to the Fmt family.

The catalysed reaction is L-methionyl-tRNA(fMet) + (6R)-10-formyltetrahydrofolate = N-formyl-L-methionyl-tRNA(fMet) + (6S)-5,6,7,8-tetrahydrofolate + H(+). Functionally, attaches a formyl group to the free amino group of methionyl-tRNA(fMet). The formyl group appears to play a dual role in the initiator identity of N-formylmethionyl-tRNA by promoting its recognition by IF2 and preventing the misappropriation of this tRNA by the elongation apparatus. The protein is Methionyl-tRNA formyltransferase of Mycobacteroides abscessus (strain ATCC 19977 / DSM 44196 / CCUG 20993 / CIP 104536 / JCM 13569 / NCTC 13031 / TMC 1543 / L948) (Mycobacterium abscessus).